Here is a 174-residue protein sequence, read N- to C-terminus: uncharacterized protein (174 aa).

Residues 1–31 (MCCVYRMNRPASGLTVVFCGKLSGKPGPKSA) form the signal peptide. The segment at 39–59 (KSGADDGGENPRFFSAGPRTE) is disordered.

This is an uncharacterized protein from Escherichia coli (strain K12).